The chain runs to 314 residues: HTH-type transcriptional regulator LeuO (314 aa).

One can recognise an HTH lysR-type domain in the interval 22–79; it reads VDLNLLTVFDAVMQEQNITRAAHVLGMSQPAVSNAVARLKVMFNDELFVRYGRGIQPT. The H-T-H motif DNA-binding region spans 39 to 58; it reads ITRAAHVLGMSQPAVSNAVA.

Belongs to the LysR transcriptional regulatory family.

Its function is as follows. A global transcription factor. Activates transcription of the 9 following operons; yjjQ-bglJ, yjjP, acrEF, ybdO, yjcRQP, casABCDE12, rhsD-ybbC, fepE and gltF, in most cases it probably interferes with silencing by H-NS and activates transcription. Represses transcription of the 3 following operons; uxaCA, sdaCB and btsT. H-NS repression of the bgl operon, leading to the ability to metabolize some beta-glucosides. It also directly activates the bgl operon. Activation is H-NS and BglJ-RcsB independent. The chain is HTH-type transcriptional regulator LeuO (leuO) from Escherichia coli (strain K12).